We begin with the raw amino-acid sequence, 138 residues long: Putative pre-16S rRNA nuclease (138 aa).

The protein belongs to the YqgF nuclease family.

Its subcellular location is the cytoplasm. In terms of biological role, could be a nuclease involved in processing of the 5'-end of pre-16S rRNA. The chain is Putative pre-16S rRNA nuclease from Caldicellulosiruptor saccharolyticus (strain ATCC 43494 / DSM 8903 / Tp8T 6331).